Here is a 115-residue protein sequence, read N- to C-terminus: Superoxide reductase (115 aa).

Fe cation contacts are provided by E14, H16, H41, H47, C102, and H105.

This sequence belongs to the desulfoferrodoxin family. In terms of assembly, homotetramer. It depends on Fe cation as a cofactor.

The enzyme catalyses reduced [rubredoxin] + superoxide + 2 H(+) = oxidized [rubredoxin] + H2O2. Functionally, uses electrons from reduced NADP, by way of rubredoxin and an oxidoreductase, to catalyze the reduction of superoxide to hydrogen peroxide. The chain is Superoxide reductase (sorA) from Pyrococcus abyssi (strain GE5 / Orsay).